The following is a 209-amino-acid chain: FMN-dependent NADH:quinone oxidoreductase (209 aa).

Residues Ser-10, Ser-16–Ser-18, and Met-98–Phe-101 contribute to the FMN site.

This sequence belongs to the azoreductase type 1 family. As to quaternary structure, homodimer. Requires FMN as cofactor.

The enzyme catalyses 2 a quinone + NADH + H(+) = 2 a 1,4-benzosemiquinone + NAD(+). It catalyses the reaction N,N-dimethyl-1,4-phenylenediamine + anthranilate + 2 NAD(+) = 2-(4-dimethylaminophenyl)diazenylbenzoate + 2 NADH + 2 H(+). Quinone reductase that provides resistance to thiol-specific stress caused by electrophilic quinones. Functionally, also exhibits azoreductase activity. Catalyzes the reductive cleavage of the azo bond in aromatic azo compounds to the corresponding amines. This chain is FMN-dependent NADH:quinone oxidoreductase, found in Nitratidesulfovibrio vulgaris (strain ATCC 29579 / DSM 644 / CCUG 34227 / NCIMB 8303 / VKM B-1760 / Hildenborough) (Desulfovibrio vulgaris).